Reading from the N-terminus, the 207-residue chain is Large ribosomal subunit protein uL4 (207 aa).

Residues 45 to 78 (RQGTHAVKNRSAVSGGGRKPWRQKGTGRARQGSI) are disordered.

The protein belongs to the universal ribosomal protein uL4 family. As to quaternary structure, part of the 50S ribosomal subunit.

Functionally, one of the primary rRNA binding proteins, this protein initially binds near the 5'-end of the 23S rRNA. It is important during the early stages of 50S assembly. It makes multiple contacts with different domains of the 23S rRNA in the assembled 50S subunit and ribosome. Forms part of the polypeptide exit tunnel. This chain is Large ribosomal subunit protein uL4, found in Lacticaseibacillus paracasei (strain ATCC 334 / BCRC 17002 / CCUG 31169 / CIP 107868 / KCTC 3260 / NRRL B-441) (Lactobacillus paracasei).